The primary structure comprises 285 residues: MRPMTHVPVLYQEALDLLAVRPGGVYVDATLGGAGHARGILERGGRVIGLDQDPEAVARAKGLHLPGLTVVQGNFRHLKRHLAALGVERVDGILADLGVSSFHLDDPSRGFSYQKEGPLDMRMGLEGPTAKEVVNRLPLEALARLLRELGEEPQAYRIARAIVAAREKAPIETTTQLAEIVRKAVGFRRAGHPARKTFQALRIYVNDELNALKEFLEQAAEVLAPRGRLVVIAFHSLEDRVVKRFLRESGLKVLTKKPLVPSEKEAAQNPRARSAKLRAAEKEAP.

Residues 34 to 36 (AGH), Asp-51, Phe-75, Asp-96, and His-103 each bind S-adenosyl-L-methionine. The disordered stretch occupies residues 258 to 285 (PLVPSEKEAAQNPRARSAKLRAAEKEAP).

The protein belongs to the methyltransferase superfamily. RsmH family.

The protein localises to the cytoplasm. It catalyses the reaction cytidine(1402) in 16S rRNA + S-adenosyl-L-methionine = N(4)-methylcytidine(1402) in 16S rRNA + S-adenosyl-L-homocysteine + H(+). Specifically methylates the N4 position of cytidine in position 1402 (C1402) of 16S rRNA. The polypeptide is Ribosomal RNA small subunit methyltransferase H (Thermus thermophilus (strain ATCC BAA-163 / DSM 7039 / HB27)).